Consider the following 426-residue polypeptide: Serine--tRNA ligase (426 aa).

231–233 is a binding site for L-serine; sequence TAE. 262-264 is an ATP binding site; sequence RSE. L-serine is bound at residue Glu285. Residue 349–352 coordinates ATP; the sequence is EISS. An L-serine-binding site is contributed by Ser385.

Belongs to the class-II aminoacyl-tRNA synthetase family. Type-1 seryl-tRNA synthetase subfamily. Homodimer. The tRNA molecule binds across the dimer.

The protein localises to the cytoplasm. The enzyme catalyses tRNA(Ser) + L-serine + ATP = L-seryl-tRNA(Ser) + AMP + diphosphate + H(+). It catalyses the reaction tRNA(Sec) + L-serine + ATP = L-seryl-tRNA(Sec) + AMP + diphosphate + H(+). It participates in aminoacyl-tRNA biosynthesis; selenocysteinyl-tRNA(Sec) biosynthesis; L-seryl-tRNA(Sec) from L-serine and tRNA(Sec): step 1/1. Catalyzes the attachment of serine to tRNA(Ser). Is also able to aminoacylate tRNA(Sec) with serine, to form the misacylated tRNA L-seryl-tRNA(Sec), which will be further converted into selenocysteinyl-tRNA(Sec). This Teredinibacter turnerae (strain ATCC 39867 / T7901) protein is Serine--tRNA ligase.